A 305-amino-acid polypeptide reads, in one-letter code: Putative F-box protein PP2-B8 (305 aa).

In terms of domain architecture, F-box spans Val33–Phe79.

This Arabidopsis thaliana (Mouse-ear cress) protein is Putative F-box protein PP2-B8 (PP2B8).